Here is a 217-residue protein sequence, read N- to C-terminus: MNWQIAIDGPSSSGKSSVAKKIAEELDFFYFSSGKMYRAFAYVMQVNRLNIDLFLKIINQINWRFEKDAVYYNNADITTVITTQSVANIASKIAVDPNIRKIAVIKQQKLAENKNIVMDGRDIGTVVLKNAQLKFFLDAKVEIRAQRRLQDMGISLSNEKKLKELIQELKQRDQIDSSRTADPLKKAQDAIYLDTSELSFDAVVKQTLKEAKKVFKL.

9–17 (GPSSSGKSS) provides a ligand contact to ATP.

Belongs to the cytidylate kinase family. Type 1 subfamily.

The protein localises to the cytoplasm. It carries out the reaction CMP + ATP = CDP + ADP. The enzyme catalyses dCMP + ATP = dCDP + ADP. The protein is Cytidylate kinase of Mycoplasma genitalium (strain ATCC 33530 / DSM 19775 / NCTC 10195 / G37) (Mycoplasmoides genitalium).